Here is a 317-residue protein sequence, read N- to C-terminus: Acetyl-coenzyme A carboxylase carboxyl transferase subunit alpha (317 aa).

The 255-residue stretch at 40–294 (RLQKKSEELT…KARLLTDLED (255 aa)) folds into the CoA carboxyltransferase C-terminal domain.

It belongs to the AccA family. In terms of assembly, acetyl-CoA carboxylase is a heterohexamer composed of biotin carboxyl carrier protein (AccB), biotin carboxylase (AccC) and two subunits each of ACCase subunit alpha (AccA) and ACCase subunit beta (AccD).

The protein localises to the cytoplasm. The enzyme catalyses N(6)-carboxybiotinyl-L-lysyl-[protein] + acetyl-CoA = N(6)-biotinyl-L-lysyl-[protein] + malonyl-CoA. It functions in the pathway lipid metabolism; malonyl-CoA biosynthesis; malonyl-CoA from acetyl-CoA: step 1/1. Component of the acetyl coenzyme A carboxylase (ACC) complex. First, biotin carboxylase catalyzes the carboxylation of biotin on its carrier protein (BCCP) and then the CO(2) group is transferred by the carboxyltransferase to acetyl-CoA to form malonyl-CoA. This is Acetyl-coenzyme A carboxylase carboxyl transferase subunit alpha from Actinobacillus succinogenes (strain ATCC 55618 / DSM 22257 / CCUG 43843 / 130Z).